Consider the following 142-residue polypeptide: Putative pre-16S rRNA nuclease (142 aa).

The protein belongs to the YqgF nuclease family.

The protein resides in the cytoplasm. Its function is as follows. Could be a nuclease involved in processing of the 5'-end of pre-16S rRNA. This Azotobacter vinelandii (strain DJ / ATCC BAA-1303) protein is Putative pre-16S rRNA nuclease.